Reading from the N-terminus, the 625-residue chain is DELLA protein SLR1 (625 aa).

The disordered stretch occupies residues M1–E34. Residues D39 to A43 carry the DELLA motif motif. The segment at T167 to V208 is disordered. Residues T189 to S198 are compositionally biased toward low complexity. The GRAS domain occupies V232–R621. Positions I239–Y294 are leucine repeat I (LRI). Positions L241–M278 are required for possible homodimerization. The short motif at L246 to E250 is the LxCxE motif element. Residues H313–G378 are VHIID. The short motif at V344 to D348 is the VHIID element. The tract at residues Q392 to E431 is leucine repeat II (LRII). Residues I441–N542 are PFYRE. The LXXLL motif motif lies at L449–L453. An SAW region spans residues A545–R621.

It belongs to the GRAS family. DELLA subfamily.

In terms of biological role, probable transcriptional regulator that acts as a repressor of the gibberellin (GA) signaling pathway. Probably acts by participating in large multiprotein complexes that repress transcription of GA-inducible genes. Upon GA application, it is degraded by the proteasome, allowing the GA signaling pathway. In contrast, its overexpression prevents the GA signaling pathway and induces a dwarf phenotype. The sequence is that of DELLA protein SLR1 from Oryza sativa subsp. indica (Rice).